A 65-amino-acid polypeptide reads, in one-letter code: Photosystem II reaction center protein Z (65 aa).

The next 2 helical transmembrane spans lie at 8 to 28 (AVFALVLLSFVLIVAVPVALA) and 41 to 61 (YAGAALWTSLIIVIGVLDSVV).

Belongs to the PsbZ family. In terms of assembly, PSII is composed of 1 copy each of membrane proteins PsbA, PsbB, PsbC, PsbD, PsbE, PsbF, PsbH, PsbI, PsbJ, PsbK, PsbL, PsbM, PsbT, PsbX, PsbY, PsbZ, Psb30/Ycf12, at least 3 peripheral proteins of the oxygen-evolving complex and a large number of cofactors. It forms dimeric complexes.

The protein localises to the plastid. The protein resides in the cyanelle thylakoid membrane. Functionally, may control the interaction of photosystem II (PSII) cores with the light-harvesting antenna, regulates electron flow through the 2 photosystem reaction centers. PSII is a light-driven water plastoquinone oxidoreductase, using light energy to abstract electrons from H(2)O, generating a proton gradient subsequently used for ATP formation. The sequence is that of Photosystem II reaction center protein Z from Cyanophora paradoxa.